A 732-amino-acid polypeptide reads, in one-letter code: Prolyl tripeptidyl peptidase (732 aa).

An N-terminal signal peptide occupies residues 1–24 (MKKTIFQQLFLSVCALTVALPCSA). Residues S603, D678, and H710 each act as charge relay system in the active site.

Belongs to the peptidase S9B family.

It catalyses the reaction Hydrolysis of Xaa-Xaa-Pro-|-Yaa- releasing the N-terminal tripeptide of a peptide with Pro as the third residue (position P1) and where Yaa is not proline.. Its function is as follows. Serine proteinase. Releases tripeptides from the free amino terminus of proteins. Has a requirement for Pro in the P1 position, but is inactivated by Pro in the P1' position. The chain is Prolyl tripeptidyl peptidase from Porphyromonas gingivalis (strain ATCC 33277 / DSM 20709 / CIP 103683 / JCM 12257 / NCTC 11834 / 2561).